We begin with the raw amino-acid sequence, 105 residues long: MIASKFGIGQQVRHKLFGYLGVIIDVDPEYSLDKPYIDKIAADDSLRTAPWYHVVMEDEDGKPVHTYLAEAQLGYEAFLEHPEQPTLDELAESIRLQLQAPRLRN.

This sequence belongs to the HspQ family.

The protein localises to the cytoplasm. Its function is as follows. Involved in the degradation of certain denaturated proteins, including DnaA, during heat shock stress. The sequence is that of Heat shock protein HspQ from Baumannia cicadellinicola subsp. Homalodisca coagulata.